The primary structure comprises 399 residues: MTAQTEFDEATVQDVVRLAGGHDSELRELTQKYDPAMISRLLVAEILSRCPPPSNDTPVLVELAIVHGSERFRHFLRVVRDSPIRPVGADEGFVGMLVEYELTELLRELFGVTHERPAGVRGTKLFPYLTDDEEAVEQIGTYLLAAQQGTEAVLAGCGSRKPDLSELSSRYFTPKFGFLHWFTPHYDRHFRDYRNQQVRVLEIGVGGYKHPEWGGGSLRMWKSFFPRGQIYGLDIMDKSHVDELRIRTIQGDQNDAEFLDRIARRYGPFDIVIDDGSHINAHVRTSFAALFPHVRPGGLYVIEDMWTAYWPGFGGQADPQECSGTSLGLLKSLIDAIQHQELPSDPNRSPGYVDRNIVGLHVYHNVAFVEKGRNDEGGIPTWIPRDFESLVQASSGGAT.

Residues Thr-173, 202-208, Ser-217, Asp-234, 252-253, and Asp-275 each bind S-adenosyl-L-methionine; these read EIGVGGY and DQ. Asp-275 lines the Mg(2+) pocket. His-278 acts as the Proton acceptor in catalysis. The Mg(2+) site is built by Glu-303 and Asp-304.

It belongs to the methyltransferase OleY/MycE family. As to quaternary structure, homotetramer. Mg(2+) is required as a cofactor.

It catalyses the reaction mycinamicin VI + S-adenosyl-L-methionine = mycinamicin III + S-adenosyl-L-homocysteine + H(+). The protein operates within antibiotic biosynthesis; mycinamicin biosynthesis. Its function is as follows. O-methyltransferase that catalyzes the conversion of mycinamicin VI to mycinamicin III in the biosynthesis of mycinamicin, a 16-membered macrolide antibiotic. The sequence is that of Mycinamicin VI 2''-O-methyltransferase (mycE) from Micromonospora griseorubida.